Here is a 202-residue protein sequence, read N- to C-terminus: Methylthioribulose-1-phosphate dehydratase (202 aa).

H93 and H95 together coordinate Zn(2+).

Belongs to the aldolase class II family. MtnB subfamily. Zn(2+) is required as a cofactor.

The catalysed reaction is 5-(methylsulfanyl)-D-ribulose 1-phosphate = 5-methylsulfanyl-2,3-dioxopentyl phosphate + H2O. The protein operates within amino-acid biosynthesis; L-methionine biosynthesis via salvage pathway; L-methionine from S-methyl-5-thio-alpha-D-ribose 1-phosphate: step 2/6. Functionally, catalyzes the dehydration of methylthioribulose-1-phosphate (MTRu-1-P) into 2,3-diketo-5-methylthiopentyl-1-phosphate (DK-MTP-1-P). This Klebsiella pneumoniae subsp. pneumoniae (strain ATCC 700721 / MGH 78578) protein is Methylthioribulose-1-phosphate dehydratase.